The following is a 1277-amino-acid chain: Clustered mitochondria protein 1 (1277 aa).

2 disordered regions span residues 19–39 (LPKE…QSSK) and 148–176 (LPLG…NTFK). Residues 27–36 (HNTKHLKKTQ) show a composition bias toward basic residues. Positions 153–176 (IKERSKQEEKDEKSDPEEKKNTFK) are enriched in basic and acidic residues. One can recognise a Clu domain in the interval 339 to 596 (PPNNPDYLRL…NTYPLDINFA (258 aa)). 3 TPR repeats span residues 704-738 (GINM…VEQD), 1020-1053 (AEKY…YERV), and 1148-1181 (GYTE…FTKQ). The tract at residues 1212-1277 (LAQDQMSTTG…TNNKKKHGKK (66 aa)) is disordered. Basic and acidic residues predominate over residues 1235 to 1249 (KKDDVKPELANKSVD). Ser-1247 bears the Phosphoserine mark. Residues 1264 to 1277 (SKNKTNNKKKHGKK) show a composition bias toward basic residues.

This sequence belongs to the CLU family. As to quaternary structure, may associate with the eukaryotic translation initiation factor 3 (eIF-3) complex. Associates with the 80S ribosome.

The protein resides in the cytoplasm. Functionally, mRNA-binding protein involved in proper cytoplasmic distribution of mitochondria. This is Clustered mitochondria protein 1 from Saccharomyces cerevisiae (strain ATCC 204508 / S288c) (Baker's yeast).